The chain runs to 1264 residues: Autophagy-related protein 11 (1264 aa).

Disordered stretches follow at residues 528 to 567 (VSGN…SSED), 1118 to 1140 (MNGA…IDDE), and 1180 to 1264 (DARG…LQGP). Over residues 551–564 (RSSVSSRRMSANQS) the composition is skewed to low complexity. The stretch at 566–887 (EDKTLAQRIV…AQARESEKEV (322 aa)) forms a coiled coil. Polar residues-rich tracts occupy residues 1190-1201 (TSNGGNVAKTLT) and 1240-1250 (TPLSPSAQEAA). Basic and acidic residues predominate over residues 1254–1264 (EEVRRDQLQGP).

The protein belongs to the ATG11 family. As to quaternary structure, homodimer.

It localises to the preautophagosomal structure membrane. Its subcellular location is the vacuole membrane. Functionally, involved in cytoplasm to vacuole transport (Cvt), pexophagy, mitophagy and nucleophagy. Recruits mitochondria for their selective degradation via autophagy (mitophagy) during starvation. Works as scaffold proteins that recruit ATG proteins to the pre-autophagosome (PAS), the site of vesicle/autophagosome formation. Required for the Cvt vesicles completion. This is Autophagy-related protein 11 (atg11) from Aspergillus fumigatus (strain ATCC MYA-4609 / CBS 101355 / FGSC A1100 / Af293) (Neosartorya fumigata).